Here is a 1153-residue protein sequence, read N- to C-terminus: Reverse gyrase 2 (1153 aa).

The RG N-terminal-type zinc finger occupies 1–41 (MLKVNYLFGCPNCNGSISVDRLHAGIPCETCLPGAVEKLDI). Residues Cys-10, Cys-13, Cys-28, and Cys-31 each coordinate Zn(2+). Residues Gln-86 and 103–110 (APTGVGKT) each bind ATP. The 187-residue stretch at 90–276 (LNKLVRGESF…ALRFLVGFEP (187 aa)) folds into the Helicase ATP-binding domain. The DEAD box motif lies at 184–187 (DDAD). The segment at 567 to 1153 (MNFKTALLVV…VNPLQSEQYV (587 aa)) is topoisomerase I. The Toprim domain maps to 571-735 (TALLVVESPT…NIFRISYNEI (165 aa)). Glu-577 serves as a coordination point for Mg(2+). The RG C-terminal-type zinc-finger motif lies at 654-681 (LYRCMSCGKTITKKVSTCPYCGSSMINS). The Zn(2+) site is built by Cys-657, Cys-660, Cys-671, and Cys-674. Residue Asp-704 participates in Mg(2+) binding. The region spanning 751 to 1142 (NESLVKAQIA…DLLNEIKNIK (392 aa)) is the Topo IA-type catalytic domain. Tyr-894 serves as the catalytic O-(5'-phospho-DNA)-tyrosine intermediate.

In the N-terminal section; belongs to the DEAD box helicase family. DDVD subfamily. This sequence in the C-terminal section; belongs to the type IA topoisomerase family. Monomer. Requires Zn(2+) as cofactor. Mg(2+) serves as cofactor.

It localises to the cytoplasm. It catalyses the reaction ATP + H2O = ADP + phosphate + H(+). In terms of biological role, modifies the topological state of DNA by introducing positive supercoils in an ATP-dependent process, increasing the linking number in steps of +1. Binds to single-stranded DNA, transiently cleaves and then rejoins the ends, introducing a positive supercoil in the process. The scissile phosphodiester is attacked by the catalytic tyrosine of the enzyme, resulting in the formation of a DNA-(5'-phosphotyrosyl)-enzyme intermediate. Probably involved in rewinding DNA strands in regions of the chromosome that have opened up to allow replication, transcription, DNA repair and/or for DNA protection. Its function is as follows. Might be a cell cycle protein. The polypeptide is Reverse gyrase 2 (Sulfolobus acidocaldarius (strain ATCC 33909 / DSM 639 / JCM 8929 / NBRC 15157 / NCIMB 11770)).